The primary structure comprises 191 residues: Calcium and integrin-binding protein 1 (191 aa).

Glycine 2 carries N-myristoyl glycine lipidation. EF-hand domains follow at residues 103–138 and 148–183; these read TPDI…LTGE and EMKQ…SPDF. Ca(2+) is bound by residues aspartate 116, aspartate 118, aspartate 120, threonine 122, aspartate 127, aspartate 161, aspartate 163, aspartate 165, threonine 167, and glutamate 172. Aspartate 118 is modified (phosphoserine).

Monomer. Interacts with MYO1C. Interacts (via C-terminal region) with PPP3R1 and CACNA1C; the interactions increase upon cardiomyocytes hypertrophy. Interacts with the heterodimeric integrin alpha-IIb/beta3 (ITGA2B-ITGB3). Interacts with ITGA2B (via cytoplasmic domain); the interaction is direct and calcium-dependent. Interacts with the protein kinases PLK2/SNK and PRKDC (via the region immediately upstream of the kinase domain). Interacts with PLK3; the interaction inhibits PLK3 kinase activity. Interacts with PSEN2. Interacts (via C-terminus) with F8. Interacts with NBR1 (via C-terminus). Interacts with FEZ1 (via C-terminus). Interacts with UBR5 (via C-terminus); the interaction is sensitive to DNA damage, and may target CIB1 for ubiquitin-mediated degradation. Interacts with IFI6; the interaction is direct. Interacts with BCL2. Interacts with ITPR3; the interaction occurs in a calcium-dependent manner. Interacts with PTK2/FAK1. Interacts with MAP3K5; the interaction inhibits MAP3K5 activation by phosphorylation, and its subsequent interaction with TRAF2. Isoform 2 interacts with PRKD2 (via N-terminal AP-rich region), PTK2/FAK1 and PAK1. Interacts with TAS1R2 (via C-terminus); the interaction is independent of the myristoylation state of CIB1. Interacts (via C-terminal region) with STMN2 (via the N-terminal region); the interaction is direct, occurs in a calcium-dependent manner and attenuates the STMN2-induced neurite outgrowth inhibition. Interacts with SPHK1, the interaction occurs in a calcium-dependent manner. Interacts with ITGA2B (via C-terminal cytoplasmic tail); the interaction occurs upon platelet aggregation and is stabilized/increased in a calcium and magnesium-dependent manner. Interacts with PAK1 (via N-terminal region); the interaction is direct and occurs in a calcium-dependent manner. Interacts with RAC3 (via C-terminal region); the interaction induces their association with the cytoskeleton upon alpha-IIb/beta3 integrin-mediated adhesion. Interacts with ITGA5 and ITGAV. Interacts and forms a complex with TMC6 and TMC8; the interaction stabilizes each component of the complex. In terms of assembly, (Microbial infection) Interacts with human papillomavirus 4/HPV4 protein E8, human papillomavirus 5/HPV5 protein E1, and human papillomavirus 16/HPV16 proteins E2 and E5. In terms of processing, phosphorylation of isoform 2 at Ser-118 by PRKD2 increases its ability to stimulate tumor angiogenesis. In terms of tissue distribution, ubiquitously expressed. Expressed in the epidermis, hair follicles and keratinocytes. Detected in platelets and in cell lines of megakaryocytic and erythrocytic lineages. Both isoform 1 and isoform 2 are detected in various cancer cell lines, with isoform 2 being the predominant form (at protein level).

Its subcellular location is the membrane. It localises to the cell membrane. The protein resides in the sarcolemma. The protein localises to the apical cell membrane. It is found in the cell projection. Its subcellular location is the ruffle membrane. It localises to the filopodium tip. The protein resides in the growth cone. The protein localises to the lamellipodium. It is found in the cytoplasm. Its subcellular location is the cytoskeleton. It localises to the microtubule organizing center. The protein resides in the centrosome. The protein localises to the perinuclear region. It is found in the nucleus. Its subcellular location is the neuron projection. It localises to the perikaryon. The protein resides in the golgi apparatus. The protein localises to the trans-Golgi network. Functionally, calcium-binding protein that plays a role in the regulation of numerous cellular processes, such as cell differentiation, cell division, cell proliferation, cell migration, thrombosis, angiogenesis, cardiac hypertrophy and apoptosis. Involved in bone marrow megakaryocyte differentiation by negatively regulating thrombopoietin-mediated signaling pathway. Participates in the endomitotic cell cycle of megakaryocyte, a form of mitosis in which both karyokinesis and cytokinesis are interrupted. Plays a role in integrin signaling by negatively regulating alpha-IIb/beta3 activation in thrombin-stimulated megakaryocytes preventing platelet aggregation. Up-regulates PTK2/FAK1 activity, and is also needed for the recruitment of PTK2/FAK1 to focal adhesions; it thus appears to play an important role in focal adhesion formation. Positively regulates cell migration on fibronectin in a CDC42-dependent manner, the effect being negatively regulated by PAK1. Functions as a negative regulator of stress activated MAP kinase (MAPK) signaling pathways. Down-regulates inositol 1,4,5-trisphosphate receptor-dependent calcium signaling. Involved in sphingosine kinase SPHK1 translocation to the plasma membrane in a N-myristoylation-dependent manner preventing TNF-alpha-induced apoptosis. Regulates serine/threonine-protein kinase PLK3 activity for proper completion of cell division progression. Plays a role in microtubule (MT) dynamics during neuronal development; disrupts the MT depolymerization activity of STMN2 attenuating NGF-induced neurite outgrowth and the MT reorganization at the edge of lamellipodia. Promotes cardiomyocyte hypertrophy via activation of the calcineurin/NFAT signaling pathway. Stimulates calcineurin PPP3R1 activity by mediating its anchoring to the sarcolemma. In ischemia-induced (pathological or adaptive) angiogenesis, stimulates endothelial cell proliferation, migration and microvessel formation by activating the PAK1 and ERK1/ERK2 signaling pathway. Also promotes cancer cell survival and proliferation. May regulate cell cycle and differentiation of spermatogenic germ cells, and/or differentiation of supporting Sertoli cells. Forms a complex with TMC6/EVER1 and TMC8/EVER2 in lymphocytes and keratynocytes where CIB1 stabilizes TMC6 and TMC8 levels and reciprocally. In terms of biological role, acts as a restriction factor that promotes keratinocyte-intrinsic immunity to human beta-papillomaviruses (HPVs). Its function is as follows. Plays a regulatory role in angiogenesis and tumor growth by mediating PKD/PRKD2-induced vascular endothelial growth factor A (VEGFA) secretion. This Homo sapiens (Human) protein is Calcium and integrin-binding protein 1 (CIB1).